A 167-amino-acid chain; its full sequence is NADH-quinone oxidoreductase subunit B 2 (167 aa).

Residues C38, C39, C103, and C132 each coordinate [4Fe-4S] cluster.

The protein belongs to the complex I 20 kDa subunit family. As to quaternary structure, NDH-1 is composed of 14 different subunits. Subunits NuoB, C, D, E, F, and G constitute the peripheral sector of the complex. Requires [4Fe-4S] cluster as cofactor.

It localises to the cell inner membrane. It catalyses the reaction a quinone + NADH + 5 H(+)(in) = a quinol + NAD(+) + 4 H(+)(out). In terms of biological role, NDH-1 shuttles electrons from NADH, via FMN and iron-sulfur (Fe-S) centers, to quinones in the respiratory chain. The immediate electron acceptor for the enzyme in this species is believed to be ubiquinone. Couples the redox reaction to proton translocation (for every two electrons transferred, four hydrogen ions are translocated across the cytoplasmic membrane), and thus conserves the redox energy in a proton gradient. In Rhizobium etli (strain CIAT 652), this protein is NADH-quinone oxidoreductase subunit B 2.